Reading from the N-terminus, the 387-residue chain is Alanine racemase (387 aa).

The active-site Proton acceptor; specific for D-alanine is lysine 48. Lysine 48 carries the post-translational modification N6-(pyridoxal phosphate)lysine. Arginine 146 contacts substrate. The Proton acceptor; specific for L-alanine role is filled by tyrosine 267. Substrate is bound at residue methionine 315.

This sequence belongs to the alanine racemase family. Pyridoxal 5'-phosphate serves as cofactor.

The catalysed reaction is L-alanine = D-alanine. It participates in amino-acid biosynthesis; D-alanine biosynthesis; D-alanine from L-alanine: step 1/1. In terms of biological role, catalyzes the interconversion of L-alanine and D-alanine. May also act on other amino acids. In Methylacidiphilum infernorum (isolate V4) (Methylokorus infernorum (strain V4)), this protein is Alanine racemase (alr).